The primary structure comprises 102 residues: Small ribosomal subunit protein uS10 (102 aa).

The protein belongs to the universal ribosomal protein uS10 family. As to quaternary structure, part of the 30S ribosomal subunit.

Its function is as follows. Involved in the binding of tRNA to the ribosomes. In Sulfolobus acidocaldarius (strain ATCC 33909 / DSM 639 / JCM 8929 / NBRC 15157 / NCIMB 11770), this protein is Small ribosomal subunit protein uS10.